Consider the following 485-residue polypeptide: MEASADSSEAPAVCRFFLEGRCRFGARCRQPHPGAPAPSPVVTQPEAGSKKPALRTAADVIRRIRWDPRLDPADFSVGYTDRFLGVQEEPFCAFCWDEPLAALGPGVLAVPQHRIRYFRFRGRLVWDRASRTDLIFGSGSVAGRGPTILDALDGGDEHWTEVTAEIPDTEKTGVGLEGLDTQDALAEAGGNPTGTGLDSGLETHEEGGAIKETRTGLDSSLETPEVDGPTKETGLNGTTELEMPDPSMNFSGVKISSVEEPRATLLPQWQAQGMETKGLSAEEMGNVWDPGVWPDDRRAPRQPRPTHFVALMVTESGLRAEVVKAQEHLVRIAPSCAEFLVPAQALHLTVVLLRLTGPGEEAAAARALRRAILKPGLQAPSQLQFRDLVLLGHHVLCATPSPTLTGMAQTLNQRLEAEGLRVVLLPELQPHLTLAKVPHGTQVCLPKPEYTLNQELGRQPLSKLWLCRMGRAGHSYLPLVEISLK.

A C3H1-type zinc finger spans residues 8–35; sequence SEAPAVCRFFLEGRCRFGARCRQPHPGA. The interval 212–247 is disordered; sequence ETRTGLDSSLETPEVDGPTKETGLNGTTELEMPDPS.

This Mus musculus (Mouse) protein is Leukocyte receptor cluster member 9 (Leng9).